A 253-amino-acid chain; its full sequence is Major prion protein (253 aa).

Residues 1 to 22 (MANLGCWMLVLFVATWSDLGLC) form the signal peptide. An interaction with ADGRG6 region spans residues 23 to 38 (KKRPKPGGWNTGGSRY). Residues 23 to 230 (KKRPKPGGWN…ESQAYYQRGS (208 aa)) form an interaction with GRB2, ERI3 and SYN1 region. The tract at residues 26–108 (PKPGGWNTGG…WNKPSKPKTS (83 aa)) is disordered. A run of 5 repeats spans residues 51 to 59 (PQGGGGWGQ), 60 to 67 (PHGGGWGQ), 68 to 75 (PHGGGWGQ), 76 to 83 (PHGGGWGQ), and 84 to 91 (PHGGGWGQ). Residues 51-91 (PQGGGGWGQPHGGGWGQPHGGGWGQPHGGGWGQPHGGGWGQ) are 5 X 8 AA tandem repeats of P-H-G-G-G-W-G-Q. The span at 52–95 (QGGGGWGQPHGGGWGQPHGGGWGQPHGGGWGQPHGGGWGQGGGT) shows a compositional bias: gly residues. Positions 61, 62, 63, 69, 70, 71, 77, 78, 79, 85, 86, and 87 each coordinate Cu(2+). A disulfide bond links C179 and C214. N-linked (GlcNAc...) asparagine glycosylation is found at N181 and N197. S230 carries the GPI-anchor amidated serine lipid modification. A propeptide spans 231-253 (SMVLFSSPPVILLISFLIFLIVG) (removed in mature form).

The protein belongs to the prion family. In terms of assembly, monomer and homodimer. Has a tendency to aggregate into amyloid fibrils containing a cross-beta spine, formed by a steric zipper of superposed beta-strands. Soluble oligomers may represent an intermediate stage on the path to fibril formation. Copper binding may promote oligomerization. Interacts with GRB2, APP, ERI3/PRNPIP and SYN1. Mislocalized cytosolically exposed PrP interacts with MGRN1; this interaction alters MGRN1 subcellular location and causes lysosomal enlargement. Interacts with APP. Interacts with KIAA1191. Interacts with ADGRG6.

Its subcellular location is the cell membrane. It localises to the golgi apparatus. Functionally, its primary physiological function is unclear. May play a role in neuronal development and synaptic plasticity. May be required for neuronal myelin sheath maintenance. May promote myelin homeostasis through acting as an agonist for ADGRG6 receptor. May play a role in iron uptake and iron homeostasis. Soluble oligomers are toxic to cultured neuroblastoma cells and induce apoptosis (in vitro). Association with GPC1 (via its heparan sulfate chains) targets PRNP to lipid rafts. Also provides Cu(2+) or Zn(2+) for the ascorbate-mediated GPC1 deaminase degradation of its heparan sulfate side chains. This is Major prion protein (PRNP) from Colobus guereza (Mantled guereza).